A 100-amino-acid polypeptide reads, in one-letter code: Urease subunit gamma (100 aa).

Belongs to the urease gamma subunit family. Heterotrimer of UreA (gamma), UreB (beta) and UreC (alpha) subunits. Three heterotrimers associate to form the active enzyme.

It is found in the cytoplasm. It catalyses the reaction urea + 2 H2O + H(+) = hydrogencarbonate + 2 NH4(+). It functions in the pathway nitrogen metabolism; urea degradation; CO(2) and NH(3) from urea (urease route): step 1/1. The sequence is that of Urease subunit gamma from Paenarthrobacter aurescens (strain TC1).